The primary structure comprises 251 residues: Chorismate mutase (251 aa).

A Chorismate mutase domain is found at 1 to 251 (MSLVNEKLKL…EVDYLLARLL (251 aa)). R74, R75, N134, G136, and S137 together coordinate L-tyrosine. 3 residues coordinate L-tryptophan: N134, G136, and S137.

In terms of assembly, homodimer.

Its subcellular location is the cytoplasm. The enzyme catalyses chorismate = prephenate. It participates in metabolic intermediate biosynthesis; prephenate biosynthesis; prephenate from chorismate: step 1/1. Its activity is regulated as follows. Each dimer has two allosteric binding sites that can bind the regulatory effectors tryptophan or tyrosine. Can bind either one tryptophan or one tyrosine, two tryptophan or two tyrosine or one tryptophan and one tyrosine, which differentially affect the catalytic activity. Activated by tryptophan and subject to feedback inhibition by tyrosine. In the presence of both tryptophan and tyrosine, the enzyme is in the activated state. Catalyzes the Claisen rearrangement of chorismate to prephenate. Acts at the first branch point in the aromatic amino acid pathway where it steers biosynthesis towards phenylalanine and tyrosine, and away from tryptophan. In Schizosaccharomyces pombe (strain 972 / ATCC 24843) (Fission yeast), this protein is Chorismate mutase.